We begin with the raw amino-acid sequence, 484 residues long: Adenylosuccinate lyase (484 aa).

N-acetylalanine is present on Ala2. Residues 20-21, 85-87, and 111-112 contribute to the substrate site; these read RY, RHD, and TS. Lys147 carries the N6-acetyllysine modification. His159 (proton donor/acceptor) is an active-site residue. A substrate-binding site is contributed by Gln241. Ser289 serves as the catalytic Proton donor/acceptor. Lys295 carries the post-translational modification N6-acetyllysine. 4 residues coordinate substrate: Arg303, Arg329, Ser334, and Arg338. Lys415 participates in a covalent cross-link: Glycyl lysine isopeptide (Lys-Gly) (interchain with G-Cter in SUMO1).

This sequence belongs to the lyase 1 family. Adenylosuccinate lyase subfamily. Homotetramer. Residues from neighboring subunits contribute catalytic and substrate-binding residues to each active site.

It catalyses the reaction N(6)-(1,2-dicarboxyethyl)-AMP = fumarate + AMP. It carries out the reaction (2S)-2-[5-amino-1-(5-phospho-beta-D-ribosyl)imidazole-4-carboxamido]succinate = 5-amino-1-(5-phospho-beta-D-ribosyl)imidazole-4-carboxamide + fumarate. It participates in purine metabolism; AMP biosynthesis via de novo pathway; AMP from IMP: step 2/2. The protein operates within purine metabolism; IMP biosynthesis via de novo pathway; 5-amino-1-(5-phospho-D-ribosyl)imidazole-4-carboxamide from 5-amino-1-(5-phospho-D-ribosyl)imidazole-4-carboxylate: step 2/2. Catalyzes two non-sequential steps in de novo AMP synthesis: converts (S)-2-(5-amino-1-(5-phospho-D-ribosyl)imidazole-4-carboxamido)succinate (SAICAR) to fumarate plus 5-amino-1-(5-phospho-D-ribosyl)imidazole-4-carboxamide, and thereby also contributes to de novo IMP synthesis, and converts succinyladenosine monophosphate (SAMP) to AMP and fumarate. The sequence is that of Adenylosuccinate lyase (Adsl) from Mus musculus (Mouse).